We begin with the raw amino-acid sequence, 459 residues long: Disease resistance protein CHL1 (459 aa).

The region spanning 16–170 is the TIR domain; sequence REVDVFLSFC…QIARDISLVV (155 aa). Residue Glu-89 is part of the active site. The NB-ARC domain occupies 191–401; sequence VYDLLALEVN…LLKLKAKQGG (211 aa). Residues 429 to 440 show a composition bias toward basic and acidic residues; sequence ERKESSQDKSQQ. A disordered region spans residues 429–459; it reads ERKESSQDKSQQESEVAADILIGKESSQDKQ.

Mostly expressed in leaves, stems and roots, and, to a lower extent, in flowers and siliques.

Its subcellular location is the cytoplasm. It catalyses the reaction NAD(+) + H2O = ADP-D-ribose + nicotinamide + H(+). In terms of biological role, confers resistance to low temperatures by limiting chloroplast damage and cell death, thus maintaining growth homeostasis. The polypeptide is Disease resistance protein CHL1 (Arabidopsis thaliana (Mouse-ear cress)).